Here is a 366-residue protein sequence, read N- to C-terminus: Flagellar P-ring protein (366 aa).

Positions 1–22 are cleaved as a signal peptide; it reads MFTRKSVILMAVLLIWSAVSYA.

This sequence belongs to the FlgI family. The basal body constitutes a major portion of the flagellar organelle and consists of four rings (L,P,S, and M) mounted on a central rod.

It is found in the periplasm. Its subcellular location is the bacterial flagellum basal body. Functionally, assembles around the rod to form the L-ring and probably protects the motor/basal body from shearing forces during rotation. The sequence is that of Flagellar P-ring protein from Hydrogenovibrio crunogenus (strain DSM 25203 / XCL-2) (Thiomicrospira crunogena).